We begin with the raw amino-acid sequence, 197 residues long: Casparian strip membrane protein 3 (197 aa).

The Cytoplasmic segment spans residues 1-35 (MSARVDIPADTSAAAKGTAPLIAASTHVKGGYKKG). Residues 36-56 (LAIFDLVLRLGAVVTALAAAA) traverse the membrane as a helical segment. Residues 57-85 (TMGTTDQTLPFFTQFFQFQASYDDLPTFQ) are Extracellular-facing. A helical transmembrane segment spans residues 86 to 106 (FFVIAMAIVSGYLVLSLPFSI). Residues 107–119 (VAIIRPHATGPRL) lie on the Cytoplasmic side of the membrane. Residues 120–140 (LLIILDTVALTLNTAAAAAAV) traverse the membrane as a helical segment. The Extracellular portion of the chain corresponds to 141 to 171 (AIVDLAQNGNSSANWLGICQQFGDFCQKASG). The N-linked (GlcNAc...) asparagine glycan is linked to N150. The helical transmembrane segment at 172–192 (AVVASFIAAGVLLFLIVISAL) threads the bilayer. Residues 193–197 (ALRKR) lie on the Cytoplasmic side of the membrane.

It belongs to the Casparian strip membrane proteins (CASP) family. Homodimer and heterodimers.

It localises to the cell membrane. Its function is as follows. Regulates membrane-cell wall junctions and localized cell wall deposition. Required for establishment of the Casparian strip membrane domain (CSD) and the subsequent formation of Casparian strips, a cell wall modification of the root endodermis that determines an apoplastic barrier between the intraorganismal apoplasm and the extraorganismal apoplasm and prevents lateral diffusion. The polypeptide is Casparian strip membrane protein 3 (Populus trichocarpa (Western balsam poplar)).